The following is a 346-amino-acid chain: Holliday junction branch migration complex subunit RuvB (346 aa).

Residues 1–182 form a large ATPase domain (RuvB-L) region; it reads MSERLVTSNE…LGVLCSMEYY (182 aa). ATP-binding positions include L21, R22, G63, K66, T67, T68, 129 to 131, R172, Y182, and R219; that span reads EDY. T67 serves as a coordination point for Mg(2+). Residues 183-253 form a small ATPAse domain (RuvB-S) region; the sequence is TDEQLKEIII…AAKKSLEILE (71 aa). The segment at 256–346 is head domain (RuvB-H); it reads GEGFDRIDNK…DSKQCTLFEK (91 aa). Residues R311 and R316 each contribute to the DNA site.

The protein belongs to the RuvB family. Homohexamer. Forms an RuvA(8)-RuvB(12)-Holliday junction (HJ) complex. HJ DNA is sandwiched between 2 RuvA tetramers; dsDNA enters through RuvA and exits via RuvB. An RuvB hexamer assembles on each DNA strand where it exits the tetramer. Each RuvB hexamer is contacted by two RuvA subunits (via domain III) on 2 adjacent RuvB subunits; this complex drives branch migration. In the full resolvosome a probable DNA-RuvA(4)-RuvB(12)-RuvC(2) complex forms which resolves the HJ.

The protein resides in the cytoplasm. The catalysed reaction is ATP + H2O = ADP + phosphate + H(+). In terms of biological role, the RuvA-RuvB-RuvC complex processes Holliday junction (HJ) DNA during genetic recombination and DNA repair, while the RuvA-RuvB complex plays an important role in the rescue of blocked DNA replication forks via replication fork reversal (RFR). RuvA specifically binds to HJ cruciform DNA, conferring on it an open structure. The RuvB hexamer acts as an ATP-dependent pump, pulling dsDNA into and through the RuvAB complex. RuvB forms 2 homohexamers on either side of HJ DNA bound by 1 or 2 RuvA tetramers; 4 subunits per hexamer contact DNA at a time. Coordinated motions by a converter formed by DNA-disengaged RuvB subunits stimulates ATP hydrolysis and nucleotide exchange. Immobilization of the converter enables RuvB to convert the ATP-contained energy into a lever motion, pulling 2 nucleotides of DNA out of the RuvA tetramer per ATP hydrolyzed, thus driving DNA branch migration. The RuvB motors rotate together with the DNA substrate, which together with the progressing nucleotide cycle form the mechanistic basis for DNA recombination by continuous HJ branch migration. Branch migration allows RuvC to scan DNA until it finds its consensus sequence, where it cleaves and resolves cruciform DNA. In Clostridium perfringens (strain 13 / Type A), this protein is Holliday junction branch migration complex subunit RuvB.